The sequence spans 427 residues: MRIALIDGEHYPDVNRWALEKLNVECAVFIGGMEKIGSIEDVERALNVKLYHDKDPFKALEKALEENDVEEVIDLSDEPVMTPELRFRIASYLLKRGIAYKGADFEFRPKEWIKLEVPSINIIGTGKRVGKTAIGGFVGRTLKERYRIVIVTMGRGGPEKPEIIRGDKITITPEFLVKIAEQGRHAASDHFEDALTAGVPTIGCRRCGGGLAGFTFLDVVKEGIEVAKTLKPELIVLEGSGASFANVLSDGFITVVSALQGERIKTYMYPLRISLADIVVVTMVEEVSEGEKIKRIIKEINPDADVHLTRFAPRLIGNVEGKAIVLTTSQESAKKMAKELERKGIEIAGYSGNLANRGRLREEMNRFNYDTVIVELKAGAVDVAIREALSNGKKVVFLDNEPVNVDGKNLKSAIKKLAERILHDKGG.

It belongs to the cyclic 2,3-diphosphoglycerate synthetase family.

Its subcellular location is the cytoplasm. It carries out the reaction (2R)-2,3-bisphosphoglycerate + ATP + H(+) = cyclic (2R)-2,3-bisphosphoglycerate + ADP + phosphate. In terms of biological role, catalyzes the formation of cyclic 2,3-diphosphoglycerate (cDPG) by formation of an intramolecular phosphoanhydride bond at the expense of ATP. This is Cyclic 2,3-diphosphoglycerate synthetase from Pyrococcus abyssi (strain GE5 / Orsay).